The primary structure comprises 51 residues: ATP synthase F(1) complex subunit epsilon, mitochondrial (51 aa).

Residues Lys-21, Lys-32, and Lys-37 each carry the N6-acetyllysine; alternate modification. Lys-21, Lys-32, and Lys-37 each carry N6-succinyllysine; alternate. Residue Lys-44 is modified to N6-acetyllysine.

It belongs to the eukaryotic ATPase epsilon family. As to quaternary structure, component of the ATP synthase complex composed at least of ATP5F1A/subunit alpha, ATP5F1B/subunit beta, ATP5MC1/subunit c (homooctomer), MT-ATP6/subunit a, MT-ATP8/subunit 8, ATP5ME/subunit e, ATP5MF/subunit f, ATP5MG/subunit g, ATP5MK/subunit k, ATP5MJ/subunit j, ATP5F1C/subunit gamma, ATP5F1D/subunit delta, ATP5F1E/subunit epsilon, ATP5PF/subunit F6, ATP5PB/subunit b, ATP5PD/subunit d, ATP5PO/subunit OSCP. ATP synthase complex consists of a soluble F(1) head domain (subunits alpha(3) and beta(3)) - the catalytic core - and a membrane F(0) domain - the membrane proton channel (subunits c, a, 8, e, f, g, k and j). These two domains are linked by a central stalk (subunits gamma, delta, and epsilon) rotating inside the F1 region and a stationary peripheral stalk (subunits F6, b, d, and OSCP).

It is found in the mitochondrion. Its subcellular location is the mitochondrion inner membrane. Its function is as follows. Subunit epsilon, of the mitochondrial membrane ATP synthase complex (F(1)F(0) ATP synthase or Complex V) that produces ATP from ADP in the presence of a proton gradient across the membrane which is generated by electron transport complexes of the respiratory chain. ATP synthase complex consist of a soluble F(1) head domain - the catalytic core - and a membrane F(1) domain - the membrane proton channel. These two domains are linked by a central stalk rotating inside the F(1) region and a stationary peripheral stalk. During catalysis, ATP synthesis in the catalytic domain of F(1) is coupled via a rotary mechanism of the central stalk subunits to proton translocation. In vivo, can only synthesize ATP although its ATP hydrolase activity can be activated artificially in vitro. May be essential for the assembly of F(1) and may play an important role in the incorporation of the hydrophobic subunit c into the F(1)-c oligomer rotor of the mitochondrial ATP synthase complex. The polypeptide is ATP synthase F(1) complex subunit epsilon, mitochondrial (Rattus norvegicus (Rat)).